The following is a 295-amino-acid chain: Cutinase 11 (295 aa).

The signal sequence occupies residues 1 to 17 (MQTSALLLAAQALVASA). A disulfide bridge links Cys-25 with Cys-102. Residues Ser-113, Asp-198, and His-210 contribute to the active site. Cys-184 and Cys-202 are joined by a disulfide. The segment at 228–258 (KLNSGGSPPTTPPTTPPTTPPTTPPTTPPPS) is disordered. The segment covering 236-258 (PTTPPTTPPTTPPTTPPTTPPPS) has biased composition (pro residues). The 36-residue stretch at 260 to 295 (SCAALYGQCGGQGWNGATCCSQGTCRASNQWYSQCL) folds into the CBM1 domain.

It belongs to the cutinase family. The 2 disulfide bonds play a critical role in holding the catalytic residues in juxta-position; reduction of the disulfide bridges results in the complete inactivation of the enzyme.

It localises to the secreted. The catalysed reaction is cutin + H2O = cutin monomers.. Its function is as follows. Catalyzes the hydrolysis of complex carboxylic polyesters found in the cell wall of plants. May degrade cutin, a macromolecule that forms the structure of the plant cuticle. May also degrade suberin, a specialized macromolecule found in the cell wall of various plant tissues. Allows pathogenic fungi to penetrate through the cuticular barrier into the host plant during the initial stage of fungal infection. Involved in pathogenesis. In Verticillium dahliae (Verticillium wilt), this protein is Cutinase 11.